A 123-amino-acid chain; its full sequence is Ig heavy chain V region HPCM6 (123 aa).

Positions 1–114 (EVKLVESGGG…YPHWYFDVWG (114 aa)) constitute an Ig-like domain.

This chain is Ig heavy chain V region HPCM6, found in Mus musculus (Mouse).